The primary structure comprises 217 residues: PTB-containing, cubilin and LRP1-interacting protein (217 aa).

The 158-residue stretch at 60–217 (VTYLGKVSTT…ASQELESDDG (158 aa)) folds into the PID domain. The interval 194–217 (KSDGRIHRSSSSEEASQELESDDG) is disordered. A phosphoserine mark is found at Ser-202, Ser-203, and Ser-214. A compositionally biased stretch (acidic residues) spans 208–217 (ASQELESDDG).

Found in a complex with PID1/PCLI1, LRP1 and CUBNI. Interacts with LRP1 and CUBN.

The protein localises to the cytoplasm. Its function is as follows. Increases proliferation of preadipocytes without affecting adipocytic differentiation. This is PTB-containing, cubilin and LRP1-interacting protein (Pid1) from Mus musculus (Mouse).